The sequence spans 676 residues: MTLEEARKRVNELRDLIRYHNYRYYVLADPEISDAEYDRLLRELKELEERFPELKSPDSPTEQVGARPLEATFRPVRHPTRMYSLDNAFNFDELKAFEERIERALGREGPFAYTVEHKVDGLSVNLYYEDGVLVYGATRGDGEVGEEVTQNLLTIPTIPRRLKGVPERLEVRGEVYMPVEAFLRLNEELEERGERIFKNPRNAAAGSLRQKDPRITAKRGLRATFYALGLGLEEVEREGVATQFALLHWLKEKGFPVEHGYARAVGAEGVEAVYQDWLKKRRALPFEADGVVVKLDELALWRELGYTARAPRFAIAYKFPAEEKETRLLDVVFQVGRTGRVTPVGILEPVFLEGSEVSRVTLHNESYIEELDIRIGDWVLVHKAGGVIPEVLRVLKERRTGEERPIRWPETCPECGHRLLKEGKVHRCPNPLCPAKRFEAIRHFASRKAMDIQGLGEKLIERLLEKGLVKDVADLYRLRKEDLVGLERMGEKSAQNLLRQIEESKRRGLERLLYALGLPGVGEVLARNLAARFGNMDRLLEASLEELLEVEEVGELTARAILETLKDPAFRDLVRRLKEAGVEMEAKEKGGEALKGLTFVITGELSRPREEVKALLRRLGAKVTDSVSRKTSYLVVGENPGSKLEKARALGVPTLTEEELYRLLEARTGKKAEELV.

NAD(+) is bound by residues 34 to 38, 84 to 85, and Glu116; these read DAEYD and SL. Lys118 functions as the N6-AMP-lysine intermediate in the catalytic mechanism. Residues Arg139, Glu174, Lys294, and Lys318 each coordinate NAD(+). Residues Cys412, Cys415, Cys428, and Cys433 each coordinate Zn(2+). In terms of domain architecture, BRCT spans 589–676; it reads KGGEALKGLT…RTGKKAEELV (88 aa).

This sequence belongs to the NAD-dependent DNA ligase family. LigA subfamily. Mg(2+) is required as a cofactor. The cofactor is Mn(2+).

The enzyme catalyses NAD(+) + (deoxyribonucleotide)n-3'-hydroxyl + 5'-phospho-(deoxyribonucleotide)m = (deoxyribonucleotide)n+m + AMP + beta-nicotinamide D-nucleotide.. DNA ligase that catalyzes the formation of phosphodiester linkages between 5'-phosphoryl and 3'-hydroxyl groups in double-stranded DNA using NAD as a coenzyme and as the energy source for the reaction. It is essential for DNA replication and repair of damaged DNA. This chain is DNA ligase, found in Thermus thermophilus (strain ATCC BAA-163 / DSM 7039 / HB27).